Reading from the N-terminus, the 255-residue chain is NAD-dependent protein deacylase (255 aa).

The Deacetylase sirtuin-type domain occupies 1 to 253 (MIEEAPRIIA…VKVKRCLENK (253 aa)). 20–39 (GAGVSAESGIPTFRDRGGLW) serves as a coordination point for NAD(+). Substrate is bound by residues tyrosine 64 and arginine 67. NAD(+) is bound at residue 98-101 (QNID). The active-site Proton acceptor is the histidine 116. Cysteine 124, cysteine 127, cysteine 151, and cysteine 154 together coordinate Zn(2+). NAD(+)-binding positions include 191 to 193 (GTS), 217 to 219 (NTK), and alanine 235.

The protein belongs to the sirtuin family. Class III subfamily. It depends on Zn(2+) as a cofactor.

It localises to the cytoplasm. The enzyme catalyses N(6)-acetyl-L-lysyl-[protein] + NAD(+) + H2O = 2''-O-acetyl-ADP-D-ribose + nicotinamide + L-lysyl-[protein]. The catalysed reaction is N(6)-succinyl-L-lysyl-[protein] + NAD(+) + H2O = 2''-O-succinyl-ADP-D-ribose + nicotinamide + L-lysyl-[protein]. Functionally, NAD-dependent lysine deacetylase and desuccinylase that specifically removes acetyl and succinyl groups on target proteins. Modulates the activities of several proteins which are inactive in their acylated form. Deacetylates the N-terminal lysine residue of Alba, the major archaeal chromatin protein and that, in turn, increases Alba's DNA binding affinity, thereby repressing transcription. The protein is NAD-dependent protein deacylase of Thermococcus sibiricus (strain DSM 12597 / MM 739).